A 299-amino-acid polypeptide reads, in one-letter code: Pyridoxal 5'-phosphate synthase subunit PdxS (299 aa).

Position 24 (Asp24) interacts with D-ribose 5-phosphate. Lys81 (schiff-base intermediate with D-ribose 5-phosphate) is an active-site residue. Position 153 (Gly153) interacts with D-ribose 5-phosphate. Arg165 is a D-glyceraldehyde 3-phosphate binding site. D-ribose 5-phosphate is bound by residues Gly219 and 240 to 241 (GS).

Belongs to the PdxS/SNZ family. In terms of assembly, in the presence of PdxT, forms a dodecamer of heterodimers.

The enzyme catalyses aldehydo-D-ribose 5-phosphate + D-glyceraldehyde 3-phosphate + L-glutamine = pyridoxal 5'-phosphate + L-glutamate + phosphate + 3 H2O + H(+). It functions in the pathway cofactor biosynthesis; pyridoxal 5'-phosphate biosynthesis. Its function is as follows. Catalyzes the formation of pyridoxal 5'-phosphate from ribose 5-phosphate (RBP), glyceraldehyde 3-phosphate (G3P) and ammonia. The ammonia is provided by the PdxT subunit. Can also use ribulose 5-phosphate and dihydroxyacetone phosphate as substrates, resulting from enzyme-catalyzed isomerization of RBP and G3P, respectively. The protein is Pyridoxal 5'-phosphate synthase subunit PdxS of Methanococcus maripaludis (strain DSM 14266 / JCM 13030 / NBRC 101832 / S2 / LL).